We begin with the raw amino-acid sequence, 282 residues long: HTH-type transcriptional activator RhaR (282 aa).

Residues 179 to 277 (DKLITALANS…GMTPSQWRHL (99 aa)) form the HTH araC/xylS-type domain. DNA-binding regions (H-T-H motif) lie at residues 196-217 (DAFC…RAQT) and 244-267 (ISEI…TRET).

Binds DNA as a dimer.

The protein localises to the cytoplasm. Its function is as follows. Activates expression of the rhaSR operon in response to L-rhamnose. The sequence is that of HTH-type transcriptional activator RhaR from Salmonella typhimurium (strain LT2 / SGSC1412 / ATCC 700720).